We begin with the raw amino-acid sequence, 99 residues long: Large ribosomal subunit protein uL23 (99 aa).

The protein belongs to the universal ribosomal protein uL23 family. As to quaternary structure, part of the 50S ribosomal subunit. Contacts protein L29, and trigger factor when it is bound to the ribosome.

Its function is as follows. One of the early assembly proteins it binds 23S rRNA. One of the proteins that surrounds the polypeptide exit tunnel on the outside of the ribosome. Forms the main docking site for trigger factor binding to the ribosome. In Stutzerimonas stutzeri (strain A1501) (Pseudomonas stutzeri), this protein is Large ribosomal subunit protein uL23.